The chain runs to 332 residues: Holliday junction branch migration complex subunit RuvB (332 aa).

The segment at 1–181 (MARILDNNVM…FGITGHMEYY (181 aa)) is large ATPase domain (RuvB-L). ATP is bound by residues Leu-20, Arg-21, Gly-62, Lys-65, Thr-66, Thr-67, 128 to 130 (EDF), Arg-171, Tyr-181, and Arg-218. Thr-66 contributes to the Mg(2+) binding site. Positions 182-252 (QEKDLTEIVE…ITDRALTMLD (71 aa)) are small ATPAse domain (RuvB-S). The tract at residues 255–332 (REGLDYIDQK…RHLGYPYQNT (78 aa)) is head domain (RuvB-H). DNA-binding residues include Arg-291, Arg-310, Arg-312, and Arg-315.

The protein belongs to the RuvB family. As to quaternary structure, homohexamer. Forms an RuvA(8)-RuvB(12)-Holliday junction (HJ) complex. HJ DNA is sandwiched between 2 RuvA tetramers; dsDNA enters through RuvA and exits via RuvB. An RuvB hexamer assembles on each DNA strand where it exits the tetramer. Each RuvB hexamer is contacted by two RuvA subunits (via domain III) on 2 adjacent RuvB subunits; this complex drives branch migration. In the full resolvosome a probable DNA-RuvA(4)-RuvB(12)-RuvC(2) complex forms which resolves the HJ.

Its subcellular location is the cytoplasm. The catalysed reaction is ATP + H2O = ADP + phosphate + H(+). The RuvA-RuvB-RuvC complex processes Holliday junction (HJ) DNA during genetic recombination and DNA repair, while the RuvA-RuvB complex plays an important role in the rescue of blocked DNA replication forks via replication fork reversal (RFR). RuvA specifically binds to HJ cruciform DNA, conferring on it an open structure. The RuvB hexamer acts as an ATP-dependent pump, pulling dsDNA into and through the RuvAB complex. RuvB forms 2 homohexamers on either side of HJ DNA bound by 1 or 2 RuvA tetramers; 4 subunits per hexamer contact DNA at a time. Coordinated motions by a converter formed by DNA-disengaged RuvB subunits stimulates ATP hydrolysis and nucleotide exchange. Immobilization of the converter enables RuvB to convert the ATP-contained energy into a lever motion, pulling 2 nucleotides of DNA out of the RuvA tetramer per ATP hydrolyzed, thus driving DNA branch migration. The RuvB motors rotate together with the DNA substrate, which together with the progressing nucleotide cycle form the mechanistic basis for DNA recombination by continuous HJ branch migration. Branch migration allows RuvC to scan DNA until it finds its consensus sequence, where it cleaves and resolves cruciform DNA. In Streptococcus pyogenes serotype M1, this protein is Holliday junction branch migration complex subunit RuvB.